The chain runs to 211 residues: Thymidylate kinase (211 aa).

11 to 18 (GPDGAGKT) is a binding site for ATP.

It belongs to the thymidylate kinase family.

The enzyme catalyses dTMP + ATP = dTDP + ADP. Its function is as follows. Phosphorylation of dTMP to form dTDP in both de novo and salvage pathways of dTTP synthesis. This Streptococcus pyogenes serotype M3 (strain ATCC BAA-595 / MGAS315) protein is Thymidylate kinase.